The following is a 99-amino-acid chain: UPF0235 protein AHA_3661 (99 aa).

The protein belongs to the UPF0235 family.

This chain is UPF0235 protein AHA_3661, found in Aeromonas hydrophila subsp. hydrophila (strain ATCC 7966 / DSM 30187 / BCRC 13018 / CCUG 14551 / JCM 1027 / KCTC 2358 / NCIMB 9240 / NCTC 8049).